We begin with the raw amino-acid sequence, 375 residues long: Probable aspartate aminotransferase (375 aa).

Gly31 and Asn165 together coordinate L-aspartate. The residue at position 223 (Lys223) is an N6-(pyridoxal phosphate)lysine. Arg353 serves as a coordination point for L-aspartate.

This sequence belongs to the class-I pyridoxal-phosphate-dependent aminotransferase family. As to quaternary structure, homodimer. The cofactor is pyridoxal 5'-phosphate.

It is found in the cytoplasm. It carries out the reaction L-aspartate + 2-oxoglutarate = oxaloacetate + L-glutamate. The sequence is that of Probable aspartate aminotransferase from Methanocaldococcus jannaschii (strain ATCC 43067 / DSM 2661 / JAL-1 / JCM 10045 / NBRC 100440) (Methanococcus jannaschii).